We begin with the raw amino-acid sequence, 374 residues long: Dual-specificity RNA methyltransferase RlmN (374 aa).

Residue Glu-94 is the Proton acceptor of the active site. One can recognise a Radical SAM core domain in the interval 100 to 339; that stretch reads EEDRATLCVS…VTIRKTRGDD (240 aa). Cys-107 and Cys-344 form a disulfide bridge. 3 residues coordinate [4Fe-4S] cluster: Cys-114, Cys-118, and Cys-121. S-adenosyl-L-methionine is bound by residues 168-169, Ser-200, 222-224, and Asn-301; these read GE and SLH. Residue Cys-344 is the S-methylcysteine intermediate of the active site.

Belongs to the radical SAM superfamily. RlmN family. The cofactor is [4Fe-4S] cluster.

The protein localises to the cytoplasm. The catalysed reaction is adenosine(2503) in 23S rRNA + 2 reduced [2Fe-2S]-[ferredoxin] + 2 S-adenosyl-L-methionine = 2-methyladenosine(2503) in 23S rRNA + 5'-deoxyadenosine + L-methionine + 2 oxidized [2Fe-2S]-[ferredoxin] + S-adenosyl-L-homocysteine. The enzyme catalyses adenosine(37) in tRNA + 2 reduced [2Fe-2S]-[ferredoxin] + 2 S-adenosyl-L-methionine = 2-methyladenosine(37) in tRNA + 5'-deoxyadenosine + L-methionine + 2 oxidized [2Fe-2S]-[ferredoxin] + S-adenosyl-L-homocysteine. Its function is as follows. Specifically methylates position 2 of adenine 2503 in 23S rRNA and position 2 of adenine 37 in tRNAs. m2A2503 modification seems to play a crucial role in the proofreading step occurring at the peptidyl transferase center and thus would serve to optimize ribosomal fidelity. This Vibrio vulnificus (strain CMCP6) protein is Dual-specificity RNA methyltransferase RlmN.